The primary structure comprises 370 residues: 4-hydroxy-3-methylbut-2-en-1-yl diphosphate synthase (flavodoxin) (370 aa).

C268, C271, C303, and E310 together coordinate [4Fe-4S] cluster.

It belongs to the IspG family. [4Fe-4S] cluster is required as a cofactor.

It catalyses the reaction (2E)-4-hydroxy-3-methylbut-2-enyl diphosphate + oxidized [flavodoxin] + H2O + 2 H(+) = 2-C-methyl-D-erythritol 2,4-cyclic diphosphate + reduced [flavodoxin]. It functions in the pathway isoprenoid biosynthesis; isopentenyl diphosphate biosynthesis via DXP pathway; isopentenyl diphosphate from 1-deoxy-D-xylulose 5-phosphate: step 5/6. Functionally, converts 2C-methyl-D-erythritol 2,4-cyclodiphosphate (ME-2,4cPP) into 1-hydroxy-2-methyl-2-(E)-butenyl 4-diphosphate. The chain is 4-hydroxy-3-methylbut-2-en-1-yl diphosphate synthase (flavodoxin) from Bacillus anthracis (strain A0248).